The sequence spans 449 residues: Glycerol-3-phosphate acyltransferase 3 (449 aa).

3 helical membrane-spanning segments follow: residues 9–29 (FVLLHVWMSIVAGLIVLPAMF), 146–166 (ISVRLTIIWGLGVFVRYCVLL), and 170–190 (ITLAVIGLSWLVIGTTLVGFL). The HXXXXD motif motif lies at 238-243 (HTSPID). A helical membrane pass occupies residues 358 to 378 (MVSYILRMMTSWAIVCNVWYL).

It belongs to the 1-acyl-sn-glycerol-3-phosphate acyltransferase family.

The protein resides in the endoplasmic reticulum membrane. The catalysed reaction is sn-glycerol 3-phosphate + an acyl-CoA = a 1-acyl-sn-glycero-3-phosphate + CoA. It carries out the reaction a 1-acyl-sn-glycero-3-phosphate + an acyl-CoA = a 1,2-diacyl-sn-glycero-3-phosphate + CoA. The enzyme catalyses dodecanoyl-CoA + sn-glycerol 3-phosphate = 1-dodecanoyl-sn-glycerol 3-phosphate + CoA. It catalyses the reaction sn-glycerol 3-phosphate + hexadecanoyl-CoA = 1-hexadecanoyl-sn-glycero-3-phosphate + CoA. The catalysed reaction is sn-glycerol 3-phosphate + (9Z)-octadecenoyl-CoA = 1-(9Z-octadecenoyl)-sn-glycero-3-phosphate + CoA. It carries out the reaction (9Z,12Z)-octadecadienoyl-CoA + sn-glycerol 3-phosphate = 1-(9Z,12Z)-octadecadienoyl-sn-glycero-3-phosphate + CoA. The enzyme catalyses 1-tetradecanoyl-sn-glycerol 3-phosphate + (9Z)-octadecenoyl-CoA = 1-tetradecanoyl-2-(9Z)-octadecenoyl-sn-glycero-3-phosphate + CoA. It catalyses the reaction 1-hexadecanoyl-sn-glycero-3-phosphate + (9Z)-octadecenoyl-CoA = 1-hexadecanoyl-2-(9Z-octadecenoyl)-sn-glycero-3-phosphate + CoA. The catalysed reaction is 1-(9Z-octadecenoyl)-sn-glycero-3-phosphate + (9Z)-octadecenoyl-CoA = 1,2-di-(9Z-octadecenoyl)-sn-glycero-3-phosphate + CoA. It carries out the reaction 1-(6Z,9Z,12Z-octadecatrienoyl)-sn-glycero-3-phosphate + (9Z)-octadecenoyl-CoA = (6Z,9Z,12Z)-octadecatrienoyl-2-(9Z)-octadecenoyl-sn-glycero-3-phosphate + CoA. The enzyme catalyses 1-(9Z,12Z,15Z)-octadecatrienoyl-sn-glycero-3-phosphate + (9Z)-octadecenoyl-CoA = 1-(9Z,12Z,15Z)-octadecatrienoyl-2-(9Z)-octadecenoyl-sn-glycero-3-phosphate + CoA. It catalyses the reaction 1-(9Z-octadecenoyl)-sn-glycero-3-phosphate + tetradecanoyl-CoA = 1-(9Z)-octadecenoyl-2-tetradecanoyl-sn-glycero-3-phosphate + CoA. The catalysed reaction is 1-(9Z-octadecenoyl)-sn-glycero-3-phosphate + hexadecanoyl-CoA = 1-(9Z)-octadecenoyl-2-hexadecanoyl-sn-glycero-3-phosphate + CoA. It carries out the reaction 1-(9Z-octadecenoyl)-sn-glycero-3-phosphate + octadecanoyl-CoA = 1-(9Z-octadecenoyl)-2-octadecanoyl-sn-glycero-3-phosphate + CoA. The enzyme catalyses 1-(9Z-octadecenoyl)-sn-glycero-3-phosphate + (9Z,12Z)-octadecadienoyl-CoA = 1-(9Z)-octadecenoyl-2-(9Z,12Z)-octadecadienoyl-sn-glycero-3-phosphate + CoA. It catalyses the reaction 1-(5Z,8Z,11Z,14Z-eicosatetraenoyl)-sn-glycero-3-phosphate + (9Z)-octadecenoyl-CoA = 1-(5Z,8Z,11Z,14Z)-eicosatetraenoyl-2-(9Z)-octadecenoyl-sn-glycero-3-phosphate + CoA. It functions in the pathway glycerolipid metabolism; triacylglycerol biosynthesis. The protein operates within phospholipid metabolism; CDP-diacylglycerol biosynthesis; CDP-diacylglycerol from sn-glycerol 3-phosphate: step 1/3. Its function is as follows. Converts glycerol-3-phosphate to 1-acyl-sn-glycerol-3-phosphate (lysophosphatidic acid or LPA) by incorporating an acyl moiety at the sn-1 position of the glycerol backbone. Also converts LPA into 1,2-diacyl-sn-glycerol-3-phosphate (phosphatidic acid or PA) by incorporating an acyl moiety at the sn-2 position of the glycerol backbone. Protects cells against lipotoxicity. The protein is Glycerol-3-phosphate acyltransferase 3 of Danio rerio (Zebrafish).